The following is a 572-amino-acid chain: Proline--tRNA ligase (572 aa).

This sequence belongs to the class-II aminoacyl-tRNA synthetase family. ProS type 1 subfamily. As to quaternary structure, homodimer.

The protein resides in the cytoplasm. The catalysed reaction is tRNA(Pro) + L-proline + ATP = L-prolyl-tRNA(Pro) + AMP + diphosphate. In terms of biological role, catalyzes the attachment of proline to tRNA(Pro) in a two-step reaction: proline is first activated by ATP to form Pro-AMP and then transferred to the acceptor end of tRNA(Pro). As ProRS can inadvertently accommodate and process non-cognate amino acids such as alanine and cysteine, to avoid such errors it has two additional distinct editing activities against alanine. One activity is designated as 'pretransfer' editing and involves the tRNA(Pro)-independent hydrolysis of activated Ala-AMP. The other activity is designated 'posttransfer' editing and involves deacylation of mischarged Ala-tRNA(Pro). The misacylated Cys-tRNA(Pro) is not edited by ProRS. This chain is Proline--tRNA ligase, found in Shewanella amazonensis (strain ATCC BAA-1098 / SB2B).